The chain runs to 202 residues: Endothelin-1 (202 aa).

An N-terminal signal peptide occupies residues 1-25; it reads MDYLPVLFSLLLVVFQGAPEAAVLG. Positions 26 to 50 are excised as a propeptide; that stretch reads AELSTGPDSGGEKPAPSAPWRPRRS. Residues 28–48 are disordered; the sequence is LSTGPDSGGEKPAPSAPWRPR. 2 disulfide bridges follow: cysteine 53–cysteine 67 and cysteine 55–cysteine 63. Positions 74–202 are excised as a propeptide; sequence VNTPEHIVPY…EKKVTHNRTH (129 aa). The segment at 110 to 124 is endothelin-like; the sequence is CQCASQKDKKCWTFC.

This sequence belongs to the endothelin/sarafotoxin family.

It is found in the secreted. Functionally, endothelins are endothelium-derived vasoconstrictor peptides. Probable ligand for G-protein coupled receptors EDNRA and EDNRB which activates PTK2B, BCAR1, BCAR3 and, GTPases RAP1 and RHOA cascade in glomerular mesangial cells. Also binds the DEAR/FBXW7-AS1 receptor. Promotes mesenteric arterial wall remodeling via activation of ROCK signaling and subsequent colocalization of NFATC3 with F-actin filaments. NFATC3 then translocates to the nucleus where it subsequently promotes the transcription of the smooth muscle hypertrophy and differentiation marker ACTA2. In Felis catus (Cat), this protein is Endothelin-1 (EDN1).